Here is a 284-residue protein sequence, read N- to C-terminus: Bifunctional protein FolD (284 aa).

Residues 165-167, S190, and I231 contribute to the NADP(+) site; that span reads GRS.

This sequence belongs to the tetrahydrofolate dehydrogenase/cyclohydrolase family. As to quaternary structure, homodimer.

It carries out the reaction (6R)-5,10-methylene-5,6,7,8-tetrahydrofolate + NADP(+) = (6R)-5,10-methenyltetrahydrofolate + NADPH. It catalyses the reaction (6R)-5,10-methenyltetrahydrofolate + H2O = (6R)-10-formyltetrahydrofolate + H(+). It participates in one-carbon metabolism; tetrahydrofolate interconversion. Catalyzes the oxidation of 5,10-methylenetetrahydrofolate to 5,10-methenyltetrahydrofolate and then the hydrolysis of 5,10-methenyltetrahydrofolate to 10-formyltetrahydrofolate. The chain is Bifunctional protein FolD from Lysinibacillus sphaericus (strain C3-41).